Consider the following 598-residue polypeptide: Acetylcholine receptor subunit alpha-type acr-5 (598 aa).

Positions Met1 to Cys16 are cleaved as a signal peptide. The Extracellular segment spans residues Gly17–Tyr323. N-linked (GlcNAc...) asparagine glycosylation is found at Asn54, Asn71, Asn77, Asn134, Asn178, and Asn252. The chain crosses the membrane as a helical span at residues Tyr324–Phe344. Topologically, residues Thr345 to Lys356 are cytoplasmic. Residues Leu357–Gln377 traverse the membrane as a helical segment. The Extracellular segment spans residues Met378 to Tyr391. The chain crosses the membrane as a helical span at residues Tyr392–Ile412. Over His413–Arg563 the chain is Cytoplasmic. The helical transmembrane segment at Ile564 to Asp584 threads the bilayer. The Extracellular portion of the chain corresponds to Ser585–Met598.

Belongs to the ligand-gated ion channel (TC 1.A.9) family. Acetylcholine receptor (TC 1.A.9.1) subfamily.

Its subcellular location is the postsynaptic cell membrane. The protein resides in the cell membrane. Its function is as follows. Subunit of nicotinic acetylcholine receptor (nAChR). Involved in nAChR sensitivity to nicotine. Modulates locomotion towards the drug nicotine. This chain is Acetylcholine receptor subunit alpha-type acr-5, found in Caenorhabditis elegans.